We begin with the raw amino-acid sequence, 191 residues long: MAALHTLWMGLVLLGVLGVLQTQAQVQVSLQPNFQQDKFLGRWFTSGLASNSSWFREKKKVLSMCVSVVAPSADGGLNLTSTFLRKEQCETRTLLLRPAGTPGCYSYTSPHWGSTHDVWVAMTDYDEYALLYTTGTKGLGQDFHMATLYSRTQTPRAEIKEKFTTFAKTQGFTEDAIVFLPQTDKCMEEHK.

The first 24 residues, 1–24 (MAALHTLWMGLVLLGVLGVLQTQA), serve as a signal peptide directing secretion. Glutamine 25 is subject to Pyrrolidone carboxylic acid. N-linked (GlcNAc...) asparagine glycosylation is present at asparagine 51. The active-site Nucleophile is the cysteine 65. Asparagine 78 is a glycosylation site (N-linked (GlcNAc...) asparagine). Cysteine 89 and cysteine 186 are oxidised to a cystine.

This sequence belongs to the calycin superfamily. Lipocalin family. As to quaternary structure, monomer.

The protein resides in the rough endoplasmic reticulum. The protein localises to the nucleus membrane. It is found in the golgi apparatus. Its subcellular location is the cytoplasm. It localises to the perinuclear region. The protein resides in the secreted. It catalyses the reaction prostaglandin H2 = prostaglandin D2. Its function is as follows. Catalyzes the conversion of PGH2 to PGD2, a prostaglandin involved in smooth muscle contraction/relaxation and a potent inhibitor of platelet aggregation. Involved in a variety of CNS functions, such as sedation, NREM sleep and PGE2-induced allodynia, and may have an anti-apoptotic role in oligodendrocytes. Binds small non-substrate lipophilic molecules, including biliverdin, bilirubin, retinal, retinoic acid and thyroid hormone, and may act as a scavenger for harmful hydrophobic molecules and as a secretory retinoid and thyroid hormone transporter. Possibly involved in development and maintenance of the blood-brain, blood-retina, blood-aqueous humor and blood-testis barrier. It is likely to play important roles in both maturation and maintenance of the central nervous system and male reproductive system. Involved in PLA2G3-dependent maturation of mast cells. PLA2G3 is secreted by immature mast cells and acts on nearby fibroblasts upstream to PTDGS to synthesize PGD2, which in turn promotes mast cell maturation and degranulation via PTGDR. The sequence is that of Prostaglandin-H2 D-isomerase (PTGDS) from Ursus arctos (Brown bear).